The following is a 487-amino-acid chain: Cytochrome P450 2C4 (487 aa).

Residue cysteine 432 participates in heme binding.

It belongs to the cytochrome P450 family. Heme serves as cofactor.

The protein resides in the endoplasmic reticulum membrane. It localises to the microsome membrane. The enzyme catalyses an organic molecule + reduced [NADPH--hemoprotein reductase] + O2 = an alcohol + oxidized [NADPH--hemoprotein reductase] + H2O + H(+). Cytochromes P450 are a group of heme-thiolate monooxygenases. In liver microsomes, this enzyme is involved in an NADPH-dependent electron transport pathway. It oxidizes a variety of structurally unrelated compounds, including steroids, fatty acids, and xenobiotics. The polypeptide is Cytochrome P450 2C4 (CYP2C4) (Oryctolagus cuniculus (Rabbit)).